The chain runs to 249 residues: 5'-nucleotidase SurE (249 aa).

Positions 8, 9, 39, and 91 each coordinate a divalent metal cation.

Belongs to the SurE nucleotidase family. The cofactor is a divalent metal cation.

It localises to the cytoplasm. The catalysed reaction is a ribonucleoside 5'-phosphate + H2O = a ribonucleoside + phosphate. In terms of biological role, nucleotidase that shows phosphatase activity on nucleoside 5'-monophosphates. This Pseudomonas savastanoi pv. phaseolicola (strain 1448A / Race 6) (Pseudomonas syringae pv. phaseolicola (strain 1448A / Race 6)) protein is 5'-nucleotidase SurE.